Reading from the N-terminus, the 272-residue chain is MIDRPLEGKVAFITGAARGLGRAHAVRLAADGANIIAVDICEQIASVPYPLSTADDLAATVELVEDAGGGIVARQGDVRDRASLSVALQAGLDEFGRLDIVVANAGIAMMQAGDDGWRDVIDVNLTGVFHTVQVAIPTLIEQGTGGSIVLISSAAGLVGIGSSDPGSLGYAAAKHGVVGLMRAYANHLAPQNIRVNSVHPCGVDTPMINNEFFQQWLTTADMDAPHNLGNALPVELVQPTDIANAVAWLASEEARYVTGVTLPVDAGFVNKR.

NAD(+) contacts are provided by residues 12 to 34 (FITG…DGAN), 39 to 40 (DI), 77 to 78 (DV), and asparagine 104. Serine 153 contacts substrate. Tyrosine 170 serves as the catalytic Proton acceptor. Residues lysine 174 and 203–205 (VDT) contribute to the NAD(+) site.

This sequence belongs to the short-chain dehydrogenases/reductases (SDR) family.

This is an uncharacterized protein from Mycobacterium tuberculosis (strain CDC 1551 / Oshkosh).